Here is a 212-residue protein sequence, read N- to C-terminus: Peptide methionine sulfoxide reductase MsrA (212 aa).

Positions 1 to 14 (MSSIDKTQRITQSD) are enriched in polar residues. Positions 1-21 (MSSIDKTQRITQSDALPGRST) are disordered. Cysteine 52 is a catalytic residue.

Belongs to the MsrA Met sulfoxide reductase family.

The enzyme catalyses L-methionyl-[protein] + [thioredoxin]-disulfide + H2O = L-methionyl-(S)-S-oxide-[protein] + [thioredoxin]-dithiol. It carries out the reaction [thioredoxin]-disulfide + L-methionine + H2O = L-methionine (S)-S-oxide + [thioredoxin]-dithiol. Functionally, has an important function as a repair enzyme for proteins that have been inactivated by oxidation. Catalyzes the reversible oxidation-reduction of methionine sulfoxide in proteins to methionine. The chain is Peptide methionine sulfoxide reductase MsrA from Pectobacterium carotovorum subsp. carotovorum (strain PC1).